Here is a 126-residue protein sequence, read N- to C-terminus: Arginine decarboxylase proenzyme (126 aa).

Serine 74 (schiff-base intermediate with substrate; via pyruvic acid) is an active-site residue. Pyruvic acid (Ser); by autocatalysis is present on serine 74. The Proton acceptor; for processing activity role is filled by histidine 79. Residue cysteine 94 is the Proton donor; for catalytic activity of the active site.

This sequence belongs to the prokaryotic AdoMetDC family. Type 1 subfamily. Heterooctamer of four alpha and four beta chains arranged as a tetramer of alpha/beta heterodimers. Pyruvate serves as cofactor. Post-translationally, is synthesized initially as an inactive proenzyme. Formation of the active enzyme involves a self-maturation process in which the active site pyruvoyl group is generated from an internal serine residue via an autocatalytic post-translational modification. Two non-identical subunits are generated from the proenzyme in this reaction, and the pyruvate is formed at the N-terminus of the alpha chain, which is derived from the carboxyl end of the proenzyme. The post-translation cleavage follows an unusual pathway, termed non-hydrolytic serinolysis, in which the side chain hydroxyl group of the serine supplies its oxygen atom to form the C-terminus of the beta chain, while the remainder of the serine residue undergoes an oxidative deamination to produce ammonia and the pyruvoyl group blocking the N-terminus of the alpha chain.

The enzyme catalyses L-arginine + H(+) = agmatine + CO2. It functions in the pathway amine and polyamine biosynthesis; agmatine biosynthesis; agmatine from L-arginine: step 1/1. Functionally, specifically catalyzes the decarboxylation of L-arginine to agmatine. Has no S-adenosylmethionine decarboxylase (AdoMetDC) activity. The polypeptide is Arginine decarboxylase proenzyme (Pyrobaculum calidifontis (strain DSM 21063 / JCM 11548 / VA1)).